We begin with the raw amino-acid sequence, 201 residues long: Osmotically-inducible protein Y (201 aa).

The signal sequence occupies residues 1–28; the sequence is MTMTRLKISKTLLAVMLTSAVATGSAYA. BON domains follow at residues 55–123 and 134–201; these read DDSA…HVRD and GDTA…LKTK.

Its subcellular location is the periplasm. This Escherichia coli (strain K12) protein is Osmotically-inducible protein Y (osmY).